The chain runs to 229 residues: Ribonuclease T (229 aa).

The Exonuclease domain occupies 23 to 197 (VIIDVETAGF…YDTERTAELF (175 aa)). Mg(2+) is bound by residues aspartate 26, glutamate 28, histidine 184, and aspartate 189. The Proton donor/acceptor role is filled by histidine 184.

Belongs to the RNase T family. Homodimer. Mg(2+) serves as cofactor.

Functionally, trims short 3' overhangs of a variety of RNA species, leaving a one or two nucleotide 3' overhang. Responsible for the end-turnover of tRNA: specifically removes the terminal AMP residue from uncharged tRNA (tRNA-C-C-A). Also appears to be involved in tRNA biosynthesis. The chain is Ribonuclease T from Haemophilus influenzae (strain PittEE).